A 569-amino-acid polypeptide reads, in one-letter code: Urease subunit alpha (569 aa).

Residues 131–569 form the Urease domain; it reads GSIDTHIHFI…VPMAQKYFLL (439 aa). Ni(2+) contacts are provided by His-136, His-138, and Lys-219. Lys-219 is modified (N6-carboxylysine). Residue His-221 coordinates substrate. Residues His-248 and His-274 each coordinate Ni(2+). His-322 functions as the Proton donor in the catalytic mechanism. A Ni(2+)-binding site is contributed by Asp-362.

It belongs to the metallo-dependent hydrolases superfamily. Urease alpha subunit family. In terms of assembly, heterotrimer of UreA (gamma), UreB (beta) and UreC (alpha) subunits. Two heterotrimers associate to form the active enzyme. In most bacteria it is thought that three heterotrimers form the active enzyme. It depends on Ni cation as a cofactor. Carboxylation allows a single lysine to coordinate two nickel ions.

Its subcellular location is the cytoplasm. It catalyses the reaction urea + 2 H2O + H(+) = hydrogencarbonate + 2 NH4(+). It functions in the pathway nitrogen metabolism; urea degradation; CO(2) and NH(3) from urea (urease route): step 1/1. Inhibited by HgCl2 and acetohydroxyamic acid slightly by EDTA, but not by boric acid or L-methionine-DL-sulfoximine. The protein is Urease subunit alpha of Prochlorococcus marinus subsp. pastoris (strain PCC 9511).